A 109-amino-acid polypeptide reads, in one-letter code: MSQGVEFNRLMLDMRAMQMDAMSAPKPVSGAQEAGASSFADMLGQAVNKVAQTQQASSQLANAFEVGKSGIDLTDVMISSQKASVSFQALTQVRNKLVQAYQDIMQMPV.

Belongs to the FliE family.

Its subcellular location is the bacterial flagellum basal body. The chain is Flagellar hook-basal body complex protein FliE from Pseudomonas syringae pv. tomato (strain ATCC BAA-871 / DC3000).